The following is a 302-amino-acid chain: Glycine--tRNA ligase alpha subunit (302 aa).

It belongs to the class-II aminoacyl-tRNA synthetase family. As to quaternary structure, tetramer of two alpha and two beta subunits.

The protein resides in the cytoplasm. It catalyses the reaction tRNA(Gly) + glycine + ATP = glycyl-tRNA(Gly) + AMP + diphosphate. The protein is Glycine--tRNA ligase alpha subunit (glyQ) of Haemophilus influenzae (strain ATCC 51907 / DSM 11121 / KW20 / Rd).